Reading from the N-terminus, the 205-residue chain is Coatomer subunit zeta-2 (205 aa).

Residues 1 to 12 show a composition bias toward basic and acidic residues; that stretch reads MQRPEAWPRPHP. The disordered stretch occupies residues 1–33; sequence MQRPEAWPRPHPGEGASAAQAGGAAPPTRATEQ. Over residues 13–30 the composition is skewed to low complexity; it reads GEGASAAQAGGAAPPTRA.

Belongs to the adaptor complexes small subunit family. As to quaternary structure, oligomeric complex.

The protein localises to the cytoplasm. Its subcellular location is the cytosol. It is found in the endoplasmic reticulum-Golgi intermediate compartment membrane. It localises to the golgi apparatus membrane. The protein resides in the cytoplasmic vesicle. The protein localises to the COPI-coated vesicle membrane. In terms of biological role, the coatomer is a cytosolic protein complex that binds to dilysine motifs and reversibly associates with Golgi non-clathrin-coated vesicles, which further mediate biosynthetic protein transport from the ER, via the Golgi up to the trans Golgi network. Coatomer complex is required for budding from Golgi membranes, and is essential for the retrograde Golgi-to-ER transport of dilysine-tagged proteins. The zeta subunit may be involved in regulating the coat assembly and, hence, the rate of biosynthetic protein transport due to its association-dissociation properties with the coatomer complex. The chain is Coatomer subunit zeta-2 (Copz2) from Mus musculus (Mouse).